Reading from the N-terminus, the 551-residue chain is Calnexin (551 aa).

Positions 1–23 are cleaved as a signal peptide; it reads MRPQNVAGVAGTGALIMAAGALA. The Lumenal segment spans residues 24–477; sequence DQTVFHPTSL…QAIKQMPEVA (454 aa). A disordered region spans residues 293-315; that stretch reads EEEPETIPDPEAEKPEEWDDEED. A helical transmembrane segment spans residues 478–498; that stretch reads AGLAAAVFTLLGMLLALFGFI. The Cytoplasmic segment spans residues 499 to 551; sequence GSAPTKVKQTTVKTKAVAPVAPAGEEEKKALDQAGVEIPAEGSKKRVTRSTKE. Residues 526 to 551 form a disordered region; that stretch reads KKALDQAGVEIPAEGSKKRVTRSTKE.

It belongs to the calreticulin family.

It is found in the endoplasmic reticulum membrane. Its function is as follows. Endoplasmic reticulum (ER) chaperone that functions to stabilize non-native glycoproteins and retain them in the ER until they are properly folded or targeted for ER associated degradation (ERAD). With co-chaperone DNJ1, coordinately maintains ER homeostasis and contributes to maintenance of cell wall architecture. This Cryptococcus neoformans var. grubii serotype A (strain H99 / ATCC 208821 / CBS 10515 / FGSC 9487) (Filobasidiella neoformans var. grubii) protein is Calnexin.